The chain runs to 257 residues: MLAKRIIPCLDVKDGQVVKGVQFRNHEIIGDIVPLAQRYAEEGADELVFYDITASSDGRVVDKSWVARVAEVIDIPFCVAGGIKTAEDAAKILEFGADKVSINSPALANPELITELADKFGVQCIVVGIDSYFDKETGKYQVYQFTGDEERTKATKWETKDWVQEVQKRGAGEIVLNMMNQDGVRNGYDLEQLNMVREVCHVPLIASGGAGEMVHFADAYNKTNVDGALAASVFHKQIINIGELKDYLAEQDVEVRR.

Residues aspartate 11 and aspartate 130 contribute to the active site.

It belongs to the HisA/HisF family. As to quaternary structure, heterodimer of HisH and HisF.

The protein localises to the cytoplasm. The enzyme catalyses 5-[(5-phospho-1-deoxy-D-ribulos-1-ylimino)methylamino]-1-(5-phospho-beta-D-ribosyl)imidazole-4-carboxamide + L-glutamine = D-erythro-1-(imidazol-4-yl)glycerol 3-phosphate + 5-amino-1-(5-phospho-beta-D-ribosyl)imidazole-4-carboxamide + L-glutamate + H(+). It participates in amino-acid biosynthesis; L-histidine biosynthesis; L-histidine from 5-phospho-alpha-D-ribose 1-diphosphate: step 5/9. Functionally, IGPS catalyzes the conversion of PRFAR and glutamine to IGP, AICAR and glutamate. The HisF subunit catalyzes the cyclization activity that produces IGP and AICAR from PRFAR using the ammonia provided by the HisH subunit. The sequence is that of Imidazole glycerol phosphate synthase subunit HisF from Aliivibrio fischeri (strain MJ11) (Vibrio fischeri).